The following is a 450-amino-acid chain: Tubulin alpha chain (450 aa).

Glutamine 11 is a GTP binding site. Position 40 is an N6-acetyllysine (lysine 40). Positions 71, 140, 144, 145, 179, 206, and 228 each coordinate GTP. Glutamate 71 provides a ligand contact to Mg(2+). Residue glutamate 254 is part of the active site.

The protein belongs to the tubulin family. As to quaternary structure, dimer of alpha and beta chains. A typical microtubule is a hollow water-filled tube with an outer diameter of 25 nm and an inner diameter of 15 nM. Alpha-beta heterodimers associate head-to-tail to form protofilaments running lengthwise along the microtubule wall with the beta-tubulin subunit facing the microtubule plus end conferring a structural polarity. Microtubules usually have 13 protofilaments but different protofilament numbers can be found in some organisms and specialized cells. Mg(2+) serves as cofactor. Undergoes a tyrosination/detyrosination cycle, the cyclic removal and re-addition of a C-terminal tyrosine residue by the enzymes tubulin tyrosine carboxypeptidase (TTCP) and tubulin tyrosine ligase (TTL), respectively. Post-translationally, acetylation of alpha chains at Lys-40 stabilizes microtubules and affects affinity and processivity of microtubule motors. This modification has a role in multiple cellular functions, ranging from cell motility, cell cycle progression or cell differentiation to intracellular trafficking and signaling.

The protein resides in the cytoplasm. Its subcellular location is the cytoskeleton. It catalyses the reaction GTP + H2O = GDP + phosphate + H(+). Its function is as follows. Tubulin is the major constituent of microtubules, a cylinder consisting of laterally associated linear protofilaments composed of alpha- and beta-tubulin heterodimers. Microtubules grow by the addition of GTP-tubulin dimers to the microtubule end, where a stabilizing cap forms. Below the cap, tubulin dimers are in GDP-bound state, owing to GTPase activity of alpha-tubulin. The chain is Tubulin alpha chain from Lepidoglyphus destructor (Storage mite).